A 435-amino-acid polypeptide reads, in one-letter code: Asparagine--tRNA ligase (435 aa).

This sequence belongs to the class-II aminoacyl-tRNA synthetase family. As to quaternary structure, homodimer.

Its subcellular location is the cytoplasm. It catalyses the reaction tRNA(Asn) + L-asparagine + ATP = L-asparaginyl-tRNA(Asn) + AMP + diphosphate + H(+). The sequence is that of Asparagine--tRNA ligase from Leptospira borgpetersenii serovar Hardjo-bovis (strain JB197).